The sequence spans 102 residues: Small ribosomal subunit protein uS14 (102 aa).

Belongs to the universal ribosomal protein uS14 family. As to quaternary structure, part of the 30S ribosomal subunit. Contacts proteins S3 and S10.

Functionally, binds 16S rRNA, required for the assembly of 30S particles and may also be responsible for determining the conformation of the 16S rRNA at the A site. This chain is Small ribosomal subunit protein uS14, found in Wolbachia pipientis subsp. Culex pipiens (strain wPip).